The sequence spans 466 residues: Coagulation factor VII (466 aa).

Positions 1–20 (MVSQALRLLCLLLGLQGCLA) are cleaved as a signal peptide. A propeptide spanning residues 21-60 (AGGVAKASGGETRDMPWKPGPHRVFVTQEEAHGVLHRRRR) is cleaved from the precursor. Positions 61-105 (ANAFLEELRPGSLERECKEEQCSFEEAREIFKDAERTKLFWISYS) constitute a Gla domain. 10 positions are modified to 4-carboxyglutamate: Glu66, Glu67, Glu74, Glu76, Glu79, Glu80, Glu85, Glu86, Glu89, and Glu95. An intrachain disulfide couples Cys77 to Cys82. The EGF-like 1; calcium-binding domain maps to 106 to 142 (DGDQCASSPCQNGGSCKDQLQSYICFCLPAFEGRNCE). 10 disulfide bridges follow: Cys110–Cys121, Cys115–Cys130, Cys132–Cys141, Cys151–Cys162, Cys158–Cys172, Cys174–Cys187, Cys195–Cys322, Cys219–Cys224, Cys238–Cys254, and Cys370–Cys389. O-linked (Glc...) serine; alternate glycosylation is present at Ser112. An O-linked (Xyl...) serine; alternate glycan is attached at Ser112. Ser120 carries an O-linked (Fuc) serine glycan. Asp123 is subject to (3R)-3-hydroxyaspartate. The EGF-like 2 domain maps to 147–188 (DQLICVNENGGCEQYCSDHTGTKRSCRCHEGYSLLADGVSCT). Asn205 carries N-linked (GlcNAc...) asparagine glycosylation. The region spanning 213–452 (IVGGKVCPKG…YIEWLQKLMR (240 aa)) is the Peptidase S1 domain. Catalysis depends on charge relay system residues His253 and Asp302. Asn382 carries N-linked (GlcNAc...) asparagine glycosylation. Position 398 (Asp398) interacts with substrate. Residues Cys400 and Cys428 are joined by a disulfide bond. Ser404 (charge relay system) is an active-site residue.

Belongs to the peptidase S1 family. In terms of assembly, heterodimer of a light chain and a heavy chain linked by a disulfide bond. Interacts (activated) with iripin-8, a serine protease inhibitor from Ixodes ricinus saliva. Post-translationally, the vitamin K-dependent, enzymatic carboxylation of some glutamate residues allows the modified protein to bind calcium. The iron and 2-oxoglutarate dependent 3-hydroxylation of aspartate and asparagine is (R) stereospecific within EGF domains. In terms of processing, O- and N-glycosylated. N-glycosylation at Asn-205 occurs cotranslationally and is mediated by STT3A-containing complexes, while glycosylation at Asn-382 is post-translational and is mediated STT3B-containing complexes before folding. O-fucosylated by POFUT1 on a conserved serine or threonine residue found in the consensus sequence C2-X(4,5)-[S/T]-C3 of EGF domains, where C2 and C3 are the second and third conserved cysteines. Post-translationally, can be either O-glucosylated or O-xylosylated at Ser-112 by POGLUT1 in vitro. Plasma.

It is found in the secreted. It carries out the reaction Selective cleavage of Arg-|-Ile bond in factor X to form factor Xa.. Its function is as follows. Initiates the extrinsic pathway of blood coagulation. Serine protease that circulates in the blood in a zymogen form. Factor VII is converted to factor VIIa by factor Xa, factor XIIa, factor IXa, or thrombin by minor proteolysis. In the presence of tissue factor and calcium ions, factor VIIa then converts factor X to factor Xa by limited proteolysis. Factor VIIa also converts factor IX to factor IXa in the presence of tissue factor and calcium. The polypeptide is Coagulation factor VII (F7) (Homo sapiens (Human)).